The sequence spans 346 residues: Sulfate/thiosulfate import ATP-binding protein CysA (346 aa).

Residues 3 to 237 (VRVANVRKEF…PNSPFVYGFI (235 aa)) form the ABC transporter domain. 35–42 (GPSGSGKT) provides a ligand contact to ATP.

This sequence belongs to the ABC transporter superfamily. Sulfate/tungstate importer (TC 3.A.1.6) family. In terms of assembly, the complex is composed of two ATP-binding proteins (CysA), two transmembrane proteins (CysT and CysW) and a solute-binding protein (CysP).

It localises to the cell inner membrane. It catalyses the reaction sulfate(out) + ATP + H2O = sulfate(in) + ADP + phosphate + H(+). It carries out the reaction thiosulfate(out) + ATP + H2O = thiosulfate(in) + ADP + phosphate + H(+). Part of the ABC transporter complex CysAWTP involved in sulfate/thiosulfate import. Responsible for energy coupling to the transport system. This chain is Sulfate/thiosulfate import ATP-binding protein CysA, found in Mesorhizobium japonicum (strain LMG 29417 / CECT 9101 / MAFF 303099) (Mesorhizobium loti (strain MAFF 303099)).